The chain runs to 381 residues: Selenoprotein P (381 aa).

The first 19 residues, 1-19 (MWRSLGLALALCLLPSGGT), serve as a signal peptide directing secretion. Asn46 is a glycosylation site (N-linked (GlcNAc...) asparagine). A non-standard amino acid (selenocysteine) is located at residue Sec59. N-linked (GlcNAc...) (complex) asparagine glycosylation is present at Asn83. Residues Asn119, Asn128, and Asn174 are each glycosylated (N-linked (GlcNAc...) asparagine). Positions 200–268 (TPSPHYHHEH…ENRDMPASED (69 aa)) are disordered. A compositionally biased stretch (basic residues) spans 204–216 (HYHHEHHHNHGHQ). Positions 218–230 (LGSSELSENQQPG) are enriched in polar residues. Positions 243-255 (LHHHHKHKGQHRQ) are enriched in basic residues. Phosphoserine is present on Ser266. Residues Sec300, Sec318, and Sec330 are each a non-standard amino acid (selenocysteine). Asn338 is a glycosylation site (N-linked (GlcNAc...) asparagine). 6 non-standard amino acids (selenocysteine) are found at residues Sec345, Sec352, Sec367, Sec369, Sec376, and Sec378. The segment at 355 to 381 (SQQLIPTEASASURUKNQAKKUEUPSN) is disordered.

It belongs to the selenoprotein P family. Phosphorylation sites are present in the extracellular medium. In terms of tissue distribution, made in the liver and heart and secreted into the plasma. It is also found in the kidney.

Its subcellular location is the secreted. Functionally, might be responsible for some of the extracellular antioxidant defense properties of selenium or might be involved in the transport of selenium. May supply selenium to tissues such as brain and testis. The sequence is that of Selenoprotein P from Homo sapiens (Human).